The chain runs to 352 residues: Leukotriene B4 receptor 1 (352 aa).

Residues 1–19 lie on the Extracellular side of the membrane; sequence MNTTSSAAPPSLGVEFISL. Asparagine 2 is a glycosylation site (N-linked (GlcNAc...) asparagine). Residues 20-42 form a helical membrane-spanning segment; the sequence is LAIILLSVALAVGLPGNSFVVWS. Over 43–54 the chain is Cytoplasmic; it reads ILKRMQKRSVTA. The chain crosses the membrane as a helical span at residues 55 to 75; sequence LMVLNLALADLAVLLTAPFFL. The Extracellular portion of the chain corresponds to 76-91; the sequence is HFLAQGTWSFGLAGCR. Residues 92-113 traverse the membrane as a helical segment; sequence LCHYVCGVSMYASVLLITAMSL. The Cytoplasmic portion of the chain corresponds to 114 to 138; that stretch reads DRSLAVARPFVSQKLRTKAMARRVL. The chain crosses the membrane as a helical span at residues 139–159; sequence AGIWVLSFLLATPVLAYRTVV. Over 160-178 the chain is Extracellular; the sequence is PWKTNMSLCFPRYPSEGHR. Asparagine 164 carries an N-linked (GlcNAc...) asparagine glycan. The helical transmembrane segment at 179 to 199 threads the bilayer; the sequence is AFHLIFEAVTGFLLPFLAVVA. Over 200–221 the chain is Cytoplasmic; that stretch reads SYSDIGRRLQARRFRRSRRTGR. The helical transmembrane segment at 222 to 242 threads the bilayer; that stretch reads LVVLIILTFAAFWLPYHVVNL. The Extracellular portion of the chain corresponds to 243 to 268; sequence AEAGRALAGQAAGLGLVGKRLSLARN. Residues 269–289 traverse the membrane as a helical segment; that stretch reads VLIALAFLSSSVNPVLYACAG. At 290–352 the chain is on the cytoplasmic side; the sequence is GGLLRSAGVG…SSPLKLNELN (63 aa). 2 stretches are compositionally biased toward polar residues: residues 310-326 and 338-352; these read SEASSTRRGGSLGQTAR and ESLTASSPLKLNELN. The interval 310–352 is disordered; that stretch reads SEASSTRRGGSLGQTARSGPAALEPGPSESLTASSPLKLNELN.

This sequence belongs to the G-protein coupled receptor 1 family. Phosphorylated by GRK6 upon leukotriene B4 binding; which promotes desensitization. Expressed at highest levels in heart, skeletal muscle and at lower levels in brain and liver. High level of expression in lymphoid tissues.

It is found in the cell membrane. Receptor for extracellular ATP &gt; UTP and ADP. The activity of this receptor is mediated by G proteins which activate a phosphatidylinositol-calcium second messenger system. May be the cardiac P2Y receptor involved in the regulation of cardiac muscle contraction through modulation of L-type calcium currents. Is a receptor for leukotriene B4, a potent chemoattractant involved in inflammation and immune response. The chain is Leukotriene B4 receptor 1 (LTB4R) from Homo sapiens (Human).